Here is a 428-residue protein sequence, read N- to C-terminus: MTVHVSNCAATAEDPVSREIRTESGQREVFCGLTGIVWLHRKIQDAFFLVVGSRTCAHLIQSAAGVMIFAEPRFGTAIMEEKDLAGLTDANIELDRIVTQLLTRRPDIKLLFLVGSCPSEVIKLDLSRAALRLSQRFSPGVRILNYSGSGIETTFTQGEDACLASLVPELPAAQDEKSSLLVVGSLADVVEDQFMRMFDALGIGPVQFFPPRKSTALPSVGPNTKILMAQPFLPDTVRALQERGAKRLAAPFPLGVEGTTGWLRAAADAFGVDPAHFDKVTGPNRARAERALAAYRTELADRRIFFFPDSQLEIPLARFLSRELSMKLVEVGTPYLHREHLAEELKLLPAGVAITEGQDVDLQLDRCRLARPDIVVCGLGLANPLEAEGITTKWSIELVFTPIQGYEQAADLAELFARPLVRRAKLVA.

Cysteine 31, cysteine 56, and cysteine 117 together coordinate [4Fe-4S] cluster.

It belongs to the BchN/ChlN family. Protochlorophyllide reductase is composed of three subunits; BchL, BchN and BchB. Forms a heterotetramer of two BchB and two BchN subunits. [4Fe-4S] cluster serves as cofactor.

The enzyme catalyses chlorophyllide a + oxidized 2[4Fe-4S]-[ferredoxin] + 2 ADP + 2 phosphate = protochlorophyllide a + reduced 2[4Fe-4S]-[ferredoxin] + 2 ATP + 2 H2O. It participates in porphyrin-containing compound metabolism; bacteriochlorophyll biosynthesis (light-independent). Component of the dark-operative protochlorophyllide reductase (DPOR) that uses Mg-ATP and reduced ferredoxin to reduce ring D of protochlorophyllide (Pchlide) to form chlorophyllide a (Chlide). This reaction is light-independent. The NB-protein (BchN-BchB) is the catalytic component of the complex. The chain is Light-independent protochlorophyllide reductase subunit N from Rhodopseudomonas palustris (strain BisB5).